The sequence spans 267 residues: 4-hydroxy-tetrahydrodipicolinate reductase (267 aa).

Residues 9–14 (GAGGRM) and aspartate 35 contribute to the NAD(+) site. Arginine 36 serves as a coordination point for NADP(+). NAD(+) contacts are provided by residues 99 to 101 (GTT) and 123 to 126 (AANY). Histidine 156 serves as the catalytic Proton donor/acceptor. (S)-2,3,4,5-tetrahydrodipicolinate is bound at residue histidine 157. Lysine 160 acts as the Proton donor in catalysis. 166–167 (GT) lines the (S)-2,3,4,5-tetrahydrodipicolinate pocket.

It belongs to the DapB family.

It localises to the cytoplasm. The enzyme catalyses (S)-2,3,4,5-tetrahydrodipicolinate + NAD(+) + H2O = (2S,4S)-4-hydroxy-2,3,4,5-tetrahydrodipicolinate + NADH + H(+). It carries out the reaction (S)-2,3,4,5-tetrahydrodipicolinate + NADP(+) + H2O = (2S,4S)-4-hydroxy-2,3,4,5-tetrahydrodipicolinate + NADPH + H(+). The protein operates within amino-acid biosynthesis; L-lysine biosynthesis via DAP pathway; (S)-tetrahydrodipicolinate from L-aspartate: step 4/4. Its function is as follows. Catalyzes the conversion of 4-hydroxy-tetrahydrodipicolinate (HTPA) to tetrahydrodipicolinate. In Halorhodospira halophila (strain DSM 244 / SL1) (Ectothiorhodospira halophila (strain DSM 244 / SL1)), this protein is 4-hydroxy-tetrahydrodipicolinate reductase.